Consider the following 83-residue polypeptide: Small ribosomal subunit protein bS16 (83 aa).

The protein belongs to the bacterial ribosomal protein bS16 family.

The polypeptide is Small ribosomal subunit protein bS16 (Acinetobacter baumannii (strain AB307-0294)).